The following is a 395-amino-acid chain: Ribosomal RNA small subunit methyltransferase H (395 aa).

S-adenosyl-L-methionine is bound by residues 101–103, aspartate 120, tyrosine 147, aspartate 171, and glutamine 178; that span reads GGH.

Belongs to the methyltransferase superfamily. RsmH family.

It is found in the cytoplasm. It catalyses the reaction cytidine(1402) in 16S rRNA + S-adenosyl-L-methionine = N(4)-methylcytidine(1402) in 16S rRNA + S-adenosyl-L-homocysteine + H(+). Functionally, specifically methylates the N4 position of cytidine in position 1402 (C1402) of 16S rRNA. The sequence is that of Ribosomal RNA small subunit methyltransferase H from Mycobacterium ulcerans (strain Agy99).